Consider the following 387-residue polypeptide: Formate-dependent phosphoribosylglycinamide formyltransferase (387 aa).

N(1)-(5-phospho-beta-D-ribosyl)glycinamide-binding positions include 12–13 (EL) and Glu-72. ATP-binding positions include Arg-104, Lys-145, 150-155 (SSGKGQ), 185-188 (EEFI), and Glu-193. One can recognise an ATP-grasp domain in the interval 109-300 (DLAARELGLA…EFELHLRAVL (192 aa)). Mg(2+) is bound by residues Glu-258 and Glu-270. N(1)-(5-phospho-beta-D-ribosyl)glycinamide contacts are provided by residues Asp-277, Lys-347, and 354–355 (RR).

It belongs to the PurK/PurT family. In terms of assembly, homodimer.

The catalysed reaction is N(1)-(5-phospho-beta-D-ribosyl)glycinamide + formate + ATP = N(2)-formyl-N(1)-(5-phospho-beta-D-ribosyl)glycinamide + ADP + phosphate + H(+). The protein operates within purine metabolism; IMP biosynthesis via de novo pathway; N(2)-formyl-N(1)-(5-phospho-D-ribosyl)glycinamide from N(1)-(5-phospho-D-ribosyl)glycinamide (formate route): step 1/1. Its function is as follows. Involved in the de novo purine biosynthesis. Catalyzes the transfer of formate to 5-phospho-ribosyl-glycinamide (GAR), producing 5-phospho-ribosyl-N-formylglycinamide (FGAR). Formate is provided by PurU via hydrolysis of 10-formyl-tetrahydrofolate. The protein is Formate-dependent phosphoribosylglycinamide formyltransferase of Anaeromyxobacter dehalogenans (strain 2CP-C).